Here is a 123-residue protein sequence, read N- to C-terminus: SPbeta prophage-derived uncharacterized protein YorE (123 aa).

The chain is SPbeta prophage-derived uncharacterized protein YorE (yorE) from Bacillus subtilis (strain 168).